Here is a 1063-residue protein sequence, read N- to C-terminus: Structural polyprotein (1063 aa).

A disordered region spans residues Met1–Ala131. The tract at residues Gly30–Gly69 is human C1QBP/SF2P32-binding. A Phosphoserine; by host modification is found at Ser46. Basic residues predominate over residues Pro59–Gly69. Positions Gln70 to Gly87 are enriched in basic and acidic residues. Pro residues predominate over residues Ala93–Pro107. Residues Cys153 and Cys197 are joined by a disulfide bond. The segment at Gly279–Ala300 is functions as E2 signal peptide. The Extracellular segment spans residues Gly301–Ser534. N-linked (GlcNAc...) asparagine; by host glycosylation is found at Asn353, Asn371, and Asn429. The helical transmembrane segment at Leu535–Cys555 threads the bilayer. Topologically, residues Arg556–Gly582 are cytoplasmic. Positions Gly563–Gly582 are functions as E1 signal peptide. At Glu583–His1028 the chain is on the extracellular side. 8 disulfides stabilise this stretch: Cys590/Cys595, Cys619/Cys824, Cys641/Cys653, Cys699/Cys712, Cys758/Cys767, Cys807/Cys817, Cys931/Cys934, and Cys950/Cys983. Asn658 carries an N-linked (GlcNAc...) asparagine; by host glycan. Ca(2+) is bound by residues Asn670 and Ala671. The Ca(2+) site is built by Asp718 and Thr719. A glycan (N-linked (GlcNAc...) asparagine; by host) is linked at Asn791. 2 O-linked (GalNAc...) threonine; by host glycosylation sites follow: Thr1011 and Thr1012. Residues Trp1029–Cys1049 traverse the membrane as a helical segment. The Extracellular segment spans residues Ala1050–Arg1063.

As to quaternary structure, homodimer; further assembles into homooligomer. Interacts with human C1QBP. Interacts (via N-terminus) with protease/methyltransferase p150. Heterodimer with spike glycoprotein E2. In terms of assembly, heterodimer with spike glycoprotein E1. In terms of processing, structural polyprotein: Specific enzymatic cleavages in vivo yield mature proteins. Two signal peptidase-mediated cleavages within the polyprotein produce the structural proteins capsid, E2, and E1. The E2 signal peptide remains attached to the C-terminus of the capsid protein after cleavage by the signal peptidase. Another signal peptide at E2 C-terminus directs E1 to the ER, with a similar mechanism. Contains three N-linked oligosaccharides. Post-translationally, capsid is phosphorylated on Ser-46 by host. This phosphorylation negatively regulates capsid protein RNA-binding activity. Dephosphorylated by human PP1A.

Its subcellular location is the virion. The protein resides in the host cytoplasm. The protein localises to the host mitochondrion. It localises to the virion membrane. It is found in the host Golgi apparatus membrane. Its function is as follows. Capsid protein interacts with genomic RNA and assembles into icosahedric core particles 65-70 nm in diameter. The resulting nucleocapsid eventually associates with the cytoplasmic domain of E2 at the cell membrane, leading to budding and formation of mature virions from host Golgi membranes. Phosphorylation negatively regulates RNA-binding activity, possibly delaying virion assembly during the viral replication phase. Capsid protein dimerizes and becomes disulfide-linked in the virion. Modulates genomic RNA replication. Modulates subgenomic RNA synthesis by interacting with human C1QBP/SF2P32. Induces both perinuclear clustering of mitochondria and the formation of electron-dense intermitochondrial plaques, both hallmarks of rubella virus infected cells. Induces apoptosis when expressed in transfected cells. In terms of biological role, responsible for viral attachment to target host cell, by binding to the cell receptor. Its transport to the plasma membrane depends on interaction with E1 protein. The surface glycoproteins display an irregular helical organization and a pseudo-tetrameric inner nucleocapsid arrangement. Class II viral fusion protein. Fusion activity is inactive as long as E1 is bound to E2 in mature virion. After virus attachment to target cell and clathrin-mediated endocytosis, acidification of the endosome would induce dissociation of E1/E2 heterodimer and concomitant trimerization of the E1 subunits. This E1 homotrimer is fusion active, and promotes release of viral nucleocapsid in cytoplasm after endosome and viral membrane fusion. The cytoplasmic tail of spike glycoprotein E1 modulates virus release. The surface glycoproteins display an irregular helical organization and a pseudo-tetrameric inner nucleocapsid arrangement. This is Structural polyprotein from Rubella virus (strain Cendehill) (RUBV).